Here is a 570-residue protein sequence, read N- to C-terminus: nebramycin 5' synthase (570 aa).

Residues 1 to 354 (MRVLGLNGWP…AAAAVAVELG (354 aa)) form a kae1-like region. Aspartate 12 is a tobramycin binding site. Residue histidine 14 is the Proton acceptor of the active site. Lysine 39 contacts ATP. Residues histidine 114, histidine 118, and aspartate 137 each contribute to the Fe cation site. 3 residues coordinate carbamoyl adenylate: glutamine 139, glycine 168, and glutamate 172. Tobramycin contacts are provided by glutamate 172 and aspartate 228. The carbamoyl adenylate site is built by glycine 310 and asparagine 314. Residue aspartate 338 coordinates Fe cation. The segment at 367 to 570 (GPEFSPDQVR…PYLVTKDLRH (204 aa)) is yrdC-like. The ATP site is built by arginine 418 and arginine 449. Residue 418–419 (RA) coordinates carbamoyl phosphate. Carbamoyl phosphate-binding positions include arginine 498 and 528-530 (NTS).

Belongs to the NodU/CmcH family. Fe(2+) is required as a cofactor.

The enzyme catalyses tobramycin + carbamoyl phosphate + ATP + H2O = nebramycin 5' + AMP + phosphate + diphosphate + H(+). It carries out the reaction kanamycin A + carbamoyl phosphate + ATP + H2O = 6''-O-carbamoylkanamycin A + AMP + phosphate + diphosphate + H(+). It catalyses the reaction carbamoyl phosphate + ATP + H2O = carbamoyl adenylate + phosphate + diphosphate. The catalysed reaction is tobramycin + carbamoyl adenylate = nebramycin 5' + AMP + H(+). The enzyme catalyses carbamoyl adenylate + kanamycin A = 6''-O-carbamoylkanamycin A + AMP + H(+). Its pathway is antibiotic biosynthesis; kanamycin biosynthesis. The protein operates within antibiotic biosynthesis; tobramycin biosynthesis. ADP inhibits the formation of nebramycin 5'. Functionally, tobZ is involved in the biosynthesis of the 2-deoxystreptamine-containing aminoglycoside antibiotics such as nebramycin 5 and 6-O-carbamoylkanamycin. Catalyzes the hydrolysis of carbamoyl phosphate and its subsequent adenylation by ATP to yield O-carbamoyladenylate. Then it catalyzes the transfer of the carbamoyl moiety from O-carbamoyladenylate to the tobramycin 6-hydroxy group to yield nebramycin 5'. It catalyzes the same reaction with kanamycin A. These reactions are considerably slower in the presence of deoxy-ATP. The chain is nebramycin 5' synthase (tobZ) from Streptoalloteichus tenebrarius (strain ATCC 17920 / DSM 40477 / JCM 4838 / CBS 697.72 / NBRC 16177 / NCIMB 11028 / NRRL B-12390 / A12253. 1 / ISP 5477) (Streptomyces tenebrarius).